The primary structure comprises 554 residues: Dihydroxy-acid dehydratase (554 aa).

Residue Asp-78 coordinates Mg(2+). Cys-119 is a binding site for [2Fe-2S] cluster. Asp-120 and Lys-121 together coordinate Mg(2+). Lys-121 bears the N6-carboxylysine mark. Cys-191 is a [2Fe-2S] cluster binding site. Glu-444 lines the Mg(2+) pocket. The active-site Proton acceptor is the Ser-470.

The protein belongs to the IlvD/Edd family. In terms of assembly, homodimer. [2Fe-2S] cluster serves as cofactor. Mg(2+) is required as a cofactor.

It carries out the reaction (2R)-2,3-dihydroxy-3-methylbutanoate = 3-methyl-2-oxobutanoate + H2O. The catalysed reaction is (2R,3R)-2,3-dihydroxy-3-methylpentanoate = (S)-3-methyl-2-oxopentanoate + H2O. Its pathway is amino-acid biosynthesis; L-isoleucine biosynthesis; L-isoleucine from 2-oxobutanoate: step 3/4. The protein operates within amino-acid biosynthesis; L-valine biosynthesis; L-valine from pyruvate: step 3/4. Its function is as follows. Functions in the biosynthesis of branched-chain amino acids. Catalyzes the dehydration of (2R,3R)-2,3-dihydroxy-3-methylpentanoate (2,3-dihydroxy-3-methylvalerate) into 2-oxo-3-methylpentanoate (2-oxo-3-methylvalerate) and of (2R)-2,3-dihydroxy-3-methylbutanoate (2,3-dihydroxyisovalerate) into 2-oxo-3-methylbutanoate (2-oxoisovalerate), the penultimate precursor to L-isoleucine and L-valine, respectively. The polypeptide is Dihydroxy-acid dehydratase (Nitratidesulfovibrio vulgaris (strain ATCC 29579 / DSM 644 / CCUG 34227 / NCIMB 8303 / VKM B-1760 / Hildenborough) (Desulfovibrio vulgaris)).